Reading from the N-terminus, the 458-residue chain is Methylenetetrahydrofolate--tRNA-(uracil-5-)-methyltransferase TrmFO (458 aa).

FAD is bound at residue 12–17 (GAGLAG).

Belongs to the MnmG family. TrmFO subfamily. The cofactor is FAD.

It localises to the cytoplasm. The enzyme catalyses uridine(54) in tRNA + (6R)-5,10-methylene-5,6,7,8-tetrahydrofolate + NADH + H(+) = 5-methyluridine(54) in tRNA + (6S)-5,6,7,8-tetrahydrofolate + NAD(+). It catalyses the reaction uridine(54) in tRNA + (6R)-5,10-methylene-5,6,7,8-tetrahydrofolate + NADPH + H(+) = 5-methyluridine(54) in tRNA + (6S)-5,6,7,8-tetrahydrofolate + NADP(+). In terms of biological role, catalyzes the folate-dependent formation of 5-methyl-uridine at position 54 (M-5-U54) in all tRNAs. In Deinococcus geothermalis (strain DSM 11300 / CIP 105573 / AG-3a), this protein is Methylenetetrahydrofolate--tRNA-(uracil-5-)-methyltransferase TrmFO.